Reading from the N-terminus, the 167-residue chain is Large ribosomal subunit protein uL10 (167 aa).

The protein belongs to the universal ribosomal protein uL10 family. Part of the ribosomal stalk of the 50S ribosomal subunit. The N-terminus interacts with L11 and the large rRNA to form the base of the stalk. The C-terminus forms an elongated spine to which L12 dimers bind in a sequential fashion forming a multimeric L10(L12)X complex.

Forms part of the ribosomal stalk, playing a central role in the interaction of the ribosome with GTP-bound translation factors. The sequence is that of Large ribosomal subunit protein uL10 from Yersinia enterocolitica serotype O:8 / biotype 1B (strain NCTC 13174 / 8081).